A 209-amino-acid polypeptide reads, in one-letter code: MLKPDNLPVTFGKNDVEIIARETLYRGFFSLDLYRFRHRLFNGQMSHEVRREIFERGHAAVLLPFDPVRDEVVLIEQIRIAAYDTSETPWLLEMVAGMIEEGESVEDVARREAIEEAGLIVKRTKPVLSFLASPGGTSERSSIMVGEVDATTASGIHGLADENEDIRVHVVSREQAYQWVEEGKIDNAASVIALQWLQLHHQALKNEWA.

Substrate is bound by residues 28–29 (FF), 51–52 (RE), arginine 56, and arginine 79. The region spanning 55–193 (ERGHAAVLLP…KIDNAASVIA (139 aa)) is the Nudix hydrolase domain. Alanine 96 is a binding site for Mg(2+). Positions 97 to 118 (GMIEEGESVEDVARREAIEEAG) match the Nudix box motif. Methionine 98 lines the substrate pocket. Residues glutamate 112 and glutamate 116 each contribute to the Mg(2+) site. Substrate is bound by residues 133–135 (SPG) and glutamate 139. Catalysis depends on glutamate 162, which acts as the Proton acceptor. Glutamate 164 contacts Mg(2+).

This sequence belongs to the Nudix hydrolase family. NudF subfamily. Homodimer. The cofactor is Mg(2+).

The catalysed reaction is ADP-D-ribose + H2O = D-ribose 5-phosphate + AMP + 2 H(+). With respect to regulation, inhibited by phosphorylated compounds such as AMP, ADP, ATP, 3-phosphoglyceric acid and PPi. Not inhibited by orthophosphate. Activity is high in cells grown in low glucose concentrations and decreases dramatically as glucose concentration increases. Its function is as follows. Acts on ADP-mannose and ADP-glucose as well as ADP-ribose. Prevents glycogen biosynthesis. The reaction catalyzed by this enzyme is a limiting step of the gluconeogenic process. This chain is ADP-ribose pyrophosphatase (nudF), found in Escherichia coli O157:H7.